Here is a 331-residue protein sequence, read N- to C-terminus: DNA-directed RNA polymerase subunit alpha (331 aa).

The tract at residues 1–226 (MLIAQRPTLT…ELFGLARELN (226 aa)) is alpha N-terminal domain (alpha-NTD). The alpha C-terminal domain (alpha-CTD) stretch occupies residues 243-331 (LSSELSMPIE…SYDEDETTTN (89 aa)).

The protein belongs to the RNA polymerase alpha chain family. As to quaternary structure, homodimer. The RNAP catalytic core consists of 2 alpha, 1 beta, 1 beta' and 1 omega subunit. When a sigma factor is associated with the core the holoenzyme is formed, which can initiate transcription.

The catalysed reaction is RNA(n) + a ribonucleoside 5'-triphosphate = RNA(n+1) + diphosphate. DNA-dependent RNA polymerase catalyzes the transcription of DNA into RNA using the four ribonucleoside triphosphates as substrates. The protein is DNA-directed RNA polymerase subunit alpha of Clavibacter sepedonicus (Clavibacter michiganensis subsp. sepedonicus).